The following is a 128-amino-acid chain: Glycine cleavage system H protein 2 (128 aa).

The Lipoyl-binding domain maps to 24–105; sequence TVTVGISDHA…PYSAWIFKVK (82 aa). K65 carries the N6-lipoyllysine modification.

It belongs to the GcvH family. As to quaternary structure, the glycine cleavage system is composed of four proteins: P, T, L and H. It depends on (R)-lipoate as a cofactor.

The glycine cleavage system catalyzes the degradation of glycine. The H protein shuttles the methylamine group of glycine from the P protein to the T protein. The sequence is that of Glycine cleavage system H protein 2 from Pseudomonas syringae pv. tomato (strain ATCC BAA-871 / DC3000).